Reading from the N-terminus, the 23-residue chain is Profilin (23 aa).

The protein belongs to the profilin family. As to quaternary structure, occurs in many kinds of cells as a complex with monomeric actin in a 1:1 ratio.

The protein localises to the cytoplasm. The protein resides in the cytoskeleton. Its function is as follows. Binds to actin and affects the structure of the cytoskeleton. At high concentrations, profilin prevents the polymerization of actin, whereas it enhances it at low concentrations. By binding to PIP2, it inhibits the formation of IP3 and DG. This Beta vulgaris (Sugar beet) protein is Profilin.